Here is a 271-residue protein sequence, read N- to C-terminus: Formamidopyrimidine-DNA glycosylase (271 aa).

The active-site Schiff-base intermediate with DNA is the proline 2. Glutamate 3 (proton donor) is an active-site residue. The active-site Proton donor; for beta-elimination activity is the lysine 58. Histidine 92, arginine 111, and lysine 152 together coordinate DNA. The segment at 237-271 (YVYGKVQKPCKICNNTITLIRQNGRSTYFCNACQN) adopts an FPG-type zinc-finger fold. Arginine 261 (proton donor; for delta-elimination activity) is an active-site residue.

Belongs to the FPG family. Monomer. It depends on Zn(2+) as a cofactor.

The enzyme catalyses Hydrolysis of DNA containing ring-opened 7-methylguanine residues, releasing 2,6-diamino-4-hydroxy-5-(N-methyl)formamidopyrimidine.. It carries out the reaction 2'-deoxyribonucleotide-(2'-deoxyribose 5'-phosphate)-2'-deoxyribonucleotide-DNA = a 3'-end 2'-deoxyribonucleotide-(2,3-dehydro-2,3-deoxyribose 5'-phosphate)-DNA + a 5'-end 5'-phospho-2'-deoxyribonucleoside-DNA + H(+). In terms of biological role, involved in base excision repair of DNA damaged by oxidation or by mutagenic agents. Acts as a DNA glycosylase that recognizes and removes damaged bases. Has a preference for oxidized purines, such as 7,8-dihydro-8-oxoguanine (8-oxoG). Has AP (apurinic/apyrimidinic) lyase activity and introduces nicks in the DNA strand. Cleaves the DNA backbone by beta-delta elimination to generate a single-strand break at the site of the removed base with both 3'- and 5'-phosphates. In Wolbachia sp. subsp. Brugia malayi (strain TRS), this protein is Formamidopyrimidine-DNA glycosylase.